The primary structure comprises 251 residues: uncharacterized protein (251 aa).

Disordered regions lie at residues 1 to 92 and 137 to 251; these read MGRP…PGSA and KPTP…LRTH. Over residues 69–92 the composition is skewed to low complexity; that stretch reads AEGAPALLGGSPSSGSPGHPPGSA. The segment covering 155–172 has biased composition (polar residues); that stretch reads SESSWQLPQLPAGSTSGS.

This is an uncharacterized protein from Homo sapiens (Human).